Here is a 445-residue protein sequence, read N- to C-terminus: Xylose isomerase (445 aa).

Residues His-107 and Asp-110 contribute to the active site. Mg(2+) is bound by residues Glu-238, Glu-274, His-277, Asp-302, Asp-313, Asp-315, and Asp-345.

The protein belongs to the xylose isomerase family. Homotetramer. Requires Mg(2+) as cofactor.

The protein resides in the cytoplasm. It carries out the reaction alpha-D-xylose = alpha-D-xylulofuranose. This chain is Xylose isomerase (xylA), found in Bacillus spizizenii (strain ATCC 23059 / NRRL B-14472 / W23) (Bacillus subtilis subsp. spizizenii).